The sequence spans 108 residues: Evasin P1229 (108 aa).

A signal peptide spans 1–31 (MEVRTFAFLQIVVFVALGIQLFAAVTDAADA). Cystine bridges form between cysteine 41–cysteine 63, cysteine 45–cysteine 65, and cysteine 56–cysteine 76. The N-linked (GlcNAc...) asparagine glycan is linked to asparagine 44. A disordered region spans residues 88–108 (GDPNNSDLDAATPRHPDASSR). An N-linked (GlcNAc...) asparagine glycan is attached at asparagine 91. A compositionally biased stretch (basic and acidic residues) spans 99–108 (TPRHPDASSR).

Its subcellular location is the secreted. Salivary chemokine-binding protein which binds to host chemokines CXCL1 and CXCL8. The chain is Evasin P1229 from Ixodes ricinus (Common tick).